The primary structure comprises 457 residues: Flavohemoprotein-2 (457 aa).

In terms of domain architecture, Globin spans 2 to 157; sequence ALSEDTIKAV…LADLLIKREE (156 aa). A heme b-binding site is contributed by H106. Residues Y116 and E156 each act as charge relay system in the active site. The segment at 168–456 is reductase; that stretch reads GGWRQTRTFR…FEMFGPFKAS (289 aa). One can recognise an FAD-binding FR-type domain in the interval 171-278; it reads RQTRTFRVEE…APPYGDFFLR (108 aa). Residues Y210 and 227–230 contribute to the FAD site; that span reads RQYS. Position 320–325 (320–325) interacts with NADP(+); that stretch reads GIGQTP. 449–452 contributes to the FAD binding site; the sequence is MFGP.

This sequence belongs to the globin family. Two-domain flavohemoproteins subfamily. It in the C-terminal section; belongs to the flavoprotein pyridine nucleotide cytochrome reductase family. In terms of assembly, monomer. Heme b serves as cofactor. The cofactor is FAD.

It carries out the reaction 2 nitric oxide + NADPH + 2 O2 = 2 nitrate + NADP(+) + H(+). The catalysed reaction is 2 nitric oxide + NADH + 2 O2 = 2 nitrate + NAD(+) + H(+). In terms of biological role, flavohemoprotein involved in nitric oxide (NO) detoxification in an aerobic process, termed nitric oxide dioxygenase (NOD) reaction that utilizes O(2) and NAD(P)H to convert NO to nitrate, which protects the protozoan parasite from various noxious nitrogen compounds. Therefore, plays a central role in the inducible response to nitrosative stress. May also be involved in O(2) detoxification. This Giardia intestinalis (strain P15) (Giardia lamblia) protein is Flavohemoprotein-2 (hmpA-2).